The primary structure comprises 215 residues: Putative lipoprotein NMB1124/NMB1162 (215 aa).

The signal sequence occupies residues 1-16 (MKPLILGLAAVLALSA). Residue C17 is the site of N-palmitoyl cysteine attachment. C17 carries the S-diacylglycerol cysteine lipid modification.

The protein localises to the cell membrane. This is Putative lipoprotein NMB1124/NMB1162 from Neisseria meningitidis serogroup B (strain ATCC BAA-335 / MC58).